Reading from the N-terminus, the 1529-residue chain is Mediator of RNA polymerase II transcription subunit 1.1 (1529 aa).

Disordered regions lie at residues proline 685–glutamate 740, glutamine 807–asparagine 919, and proline 933–glutamate 1529. A compositionally biased stretch (basic residues) spans glycine 693–lysine 702. Low complexity-rich tracts occupy residues glycine 722–glycine 739 and glutamine 807–glutamine 828. Residues threonine 894–phenylalanine 905 show a composition bias toward pro residues. Residues glutamate 908 to asparagine 919 show a composition bias toward basic and acidic residues. Composition is skewed to low complexity over residues serine 958–threonine 990 and glutamine 1008–glutamine 1023. Residues glutamine 1008–glutamate 1032 adopt a coiled-coil conformation. 3 stretches are compositionally biased toward polar residues: residues asparagine 1051–asparagine 1061, glycine 1068–serine 1089, and threonine 1096–glutamine 1105. 4 stretches are compositionally biased toward basic and acidic residues: residues leucine 1113 to isoleucine 1130, leucine 1137 to lysine 1185, arginine 1192 to serine 1240, and proline 1262 to serine 1278. A coiled-coil region spans residues glutamate 1169–aspartate 1202. Positions isoleucine 1279 to serine 1288 are enriched in low complexity. Basic and acidic residues predominate over residues serine 1289 to serine 1304. Residues serine 1349–glycine 1365 show a composition bias toward low complexity. Composition is skewed to pro residues over residues proline 1375–glycine 1386 and glutamine 1477–serine 1500.

It belongs to the Mediator complex subunit 1 family. As to quaternary structure, component of the Mediator complex.

The protein localises to the nucleus. Its function is as follows. Component of the Mediator complex, a coactivator involved in the regulated transcription of nearly all RNA polymerase II-dependent genes. Mediator functions as a bridge to convey information from gene-specific regulatory proteins to the basal RNA polymerase II transcription machinery. Mediator is recruited to promoters by direct interactions with regulatory proteins and serves as a scaffold for the assembly of a functional preinitiation complex with RNA polymerase II and the general transcription factors. The polypeptide is Mediator of RNA polymerase II transcription subunit 1.1 (sop-3) (Caenorhabditis briggsae).